The primary structure comprises 227 residues: Ribonuclease 3 (227 aa).

The RNase III domain occupies 4–133 (FETLEKLLSY…LIAAIYLDSN (130 aa)). E46 lines the Mg(2+) pocket. The active site involves D50. Residues N119 and E122 each coordinate Mg(2+). Residue E122 is part of the active site. Residues 158–226 (DPKTALQEWA…ARSLLHRLKN (69 aa)) form the DRBM domain.

The protein belongs to the ribonuclease III family. Homodimer. Requires Mg(2+) as cofactor.

It localises to the cytoplasm. The catalysed reaction is Endonucleolytic cleavage to 5'-phosphomonoester.. Its function is as follows. Digests double-stranded RNA. Involved in the processing of primary rRNA transcript to yield the immediate precursors to the large and small rRNAs (23S and 16S). Processes some mRNAs, and tRNAs when they are encoded in the rRNA operon. Processes pre-crRNA and tracrRNA of type II CRISPR loci if present in the organism. The chain is Ribonuclease 3 from Rickettsia massiliae (strain Mtu5).